Here is a 346-residue protein sequence, read N- to C-terminus: Dihydroorotase (346 aa).

Zn(2+)-binding residues include H17 and H19. Residues 19 to 21 and N45 each bind substrate; that span reads HLR. K103, H140, and H178 together coordinate Zn(2+). N6-carboxylysine is present on K103. Residue H140 coordinates substrate. L223 provides a ligand contact to substrate. D251 is a Zn(2+) binding site. The active site involves D251. Residues H255 and A267 each coordinate substrate.

The protein belongs to the metallo-dependent hydrolases superfamily. DHOase family. Class II DHOase subfamily. Homodimer. The cofactor is Zn(2+).

The catalysed reaction is (S)-dihydroorotate + H2O = N-carbamoyl-L-aspartate + H(+). Its pathway is pyrimidine metabolism; UMP biosynthesis via de novo pathway; (S)-dihydroorotate from bicarbonate: step 3/3. In terms of biological role, catalyzes the reversible cyclization of carbamoyl aspartate to dihydroorotate. The sequence is that of Dihydroorotase from Synechococcus sp. (strain RCC307).